Consider the following 461-residue polypeptide: Phosphoglucosamine mutase (461 aa).

The active-site Phosphoserine intermediate is Ser-107. The Mg(2+) site is built by Ser-107, Asp-254, Asp-256, and Asp-258. Ser-107 is modified (phosphoserine).

Belongs to the phosphohexose mutase family. Requires Mg(2+) as cofactor. Post-translationally, activated by phosphorylation.

The enzyme catalyses alpha-D-glucosamine 1-phosphate = D-glucosamine 6-phosphate. Catalyzes the conversion of glucosamine-6-phosphate to glucosamine-1-phosphate. In Bifidobacterium longum (strain DJO10A), this protein is Phosphoglucosamine mutase.